The chain runs to 105 residues: Flagellar transcriptional regulator FlhD (105 aa).

It belongs to the FlhD family. In terms of assembly, homodimer; disulfide-linked. Forms a heterohexamer composed of two FlhC and four FlhD subunits. Each FlhC binds a FlhD dimer, forming a heterotrimer, and a hexamer assembles by dimerization of two heterotrimers.

Its subcellular location is the cytoplasm. Functions in complex with FlhC as a master transcriptional regulator that regulates transcription of several flagellar and non-flagellar operons by binding to their promoter region. Activates expression of class 2 flagellar genes, including fliA, which is a flagellum-specific sigma factor that turns on the class 3 genes. Also regulates genes whose products function in a variety of physiological pathways. This Nitrosomonas eutropha (strain DSM 101675 / C91 / Nm57) protein is Flagellar transcriptional regulator FlhD.